The chain runs to 834 residues: Structure-specific endonuclease subunit SLX4 (834 aa).

Disordered regions lie at residues 80-105, 272-307, 332-372, 401-421, 603-649, and 720-740; these read RVPR…KTTT, TVPA…QKGK, QNVA…GRPV, GYPE…SNSA, ESKP…AKAL, and ATPN…SIEP. The span at 279-295 shows a compositional bias: polar residues; the sequence is PTESSTTEDVQGSSSKQ. The segment covering 296–305 has biased composition (basic residues); the sequence is QRVKAKKPQK. 2 stretches are compositionally biased toward polar residues: residues 345–366 and 412–421; these read SNRP…TLKN and DTQNSPSNSA. Residues 611-630 are compositionally biased toward basic and acidic residues; the sequence is DDARKNGFRKENHSDVRVRP. The segment covering 729–740 has biased composition (low complexity); it reads QGSSSASFSIEP.

Belongs to the SLX4 family. As to quaternary structure, forms a heterodimer with SLX1. Phosphorylated in response to DNA damage.

It localises to the nucleus. Functionally, regulatory subunit of the SLX1-SLX4 structure-specific endonuclease that resolves DNA secondary structures generated during DNA repair and recombination. Has endonuclease activity towards branched DNA substrates, introducing single-strand cuts in duplex DNA close to junctions with ss-DNA. In Ajellomyces capsulatus (strain NAm1 / WU24) (Darling's disease fungus), this protein is Structure-specific endonuclease subunit SLX4.